The following is a 127-amino-acid chain: Aspartate 1-decarboxylase (127 aa).

The Schiff-base intermediate with substrate; via pyruvic acid role is filled by Ser25. The residue at position 25 (Ser25) is a Pyruvic acid (Ser). Substrate is bound at residue Thr57. Tyr58 acts as the Proton donor in catalysis. 73 to 75 lines the substrate pocket; the sequence is GAA.

It belongs to the PanD family. In terms of assembly, heterooctamer of four alpha and four beta subunits. The cofactor is pyruvate. In terms of processing, is synthesized initially as an inactive proenzyme, which is activated by self-cleavage at a specific serine bond to produce a beta-subunit with a hydroxyl group at its C-terminus and an alpha-subunit with a pyruvoyl group at its N-terminus.

It localises to the cytoplasm. The catalysed reaction is L-aspartate + H(+) = beta-alanine + CO2. The protein operates within cofactor biosynthesis; (R)-pantothenate biosynthesis; beta-alanine from L-aspartate: step 1/1. Functionally, catalyzes the pyruvoyl-dependent decarboxylation of aspartate to produce beta-alanine. This Aliarcobacter butzleri (strain RM4018) (Arcobacter butzleri) protein is Aspartate 1-decarboxylase.